A 184-amino-acid chain; its full sequence is MVHGNDVLHHNHFRKKWQFMVKTWFNQPARKERRRQARKAKAQRIAPRPASGPLRPIVNCPTFRYNMKVRSGRGFSLQEVRAAGLNPKFARTIGIAVDHRRRNVSVEGLQRNVARLKAYKAKLILFPLNPAKPQAMDAKADEVKKATQLRRPVLPITQRAKRLKAHKPTSSELRYSAFHAIRQQ.

The tract at residues 28-53 (PARKERRRQARKAKAQRIAPRPASGP) is disordered. Residues 31 to 42 (KERRRQARKAKA) are compositionally biased toward basic residues.

This sequence belongs to the eukaryotic ribosomal protein eL13 family.

This is Large ribosomal subunit protein eL13 (RPL13) from Schistosoma mansoni (Blood fluke).